The primary structure comprises 873 residues: Zinc fingers and homeoboxes protein 1 (873 aa).

The disordered stretch occupies residues 1 to 63; the sequence is MASRRKSTTP…ESVDSDNQQN (63 aa). Residues 18–30 are compositionally biased toward acidic residues; it reads QDPDLELISDLEE. Thr-36 carries the post-translational modification Phosphothreonine. Residues Ser-45, Ser-47, and Ser-48 each carry the phosphoserine modification. C2H2-type zinc fingers lie at residues 70 to 93 and 102 to 125; these read YECKYCTFQTPDLNMFTFHVDSEH and YVCVECNFLTKRYDALSEHNLKYH. Lys-159 is covalently cross-linked (Glycyl lysine isopeptide (Lys-Gly) (interchain with G-Cter in SUMO2)). A disordered region spans residues 198 to 247; sequence VHHNSAEGTSEEKENGVKASREENAENTSSSASESNTSTSTVNQVHPSPA. Position 202 is a phosphoserine (Ser-202). Over residues 207–221 the composition is skewed to basic and acidic residues; the sequence is SEEKENGVKASREEN. The segment covering 223–238 has biased composition (low complexity); the sequence is ENTSSSASESNTSTST. Residues 272–432 form a required for dimerization region; sequence NSNLVPKVLI…QTNVQKSQVP (161 aa). Positions 272–564 are required for interaction with NFYA; it reads NSNLVPKVLI…SQPKQSWNPF (293 aa). Positions 284-346 form a DNA-binding region, homeobox 1; it reads NSIPTYNAAL…LKHGVSWTPE (63 aa). The interval 430-455 is disordered; that stretch reads QVPAAQPAAETKPATAAVPSSPSVRP. Residues Lys-441 and Lys-485 each participate in a glycyl lysine isopeptide (Lys-Gly) (interchain with G-Cter in SUMO2) cross-link. Residues 464-526 constitute a DNA-binding region (homeobox 2); the sequence is SFGIRAKKTK…YNQRNSKSNQ (63 aa). Disordered regions lie at residues 540-568, 627-664, and 731-767; these read IDSSDETPEPPAAAASQPKQSWNPFPDFA, DEKVEVDESNVGSSKEEPGENSPGDEAVAPKSAGTGKI, and SSSLNGLSSLRKRGRGRPKGRGRGRPRGRPRGGKRMN. Positions 551–560 are enriched in low complexity; that stretch reads AAAASQPKQS. Residues 569–631 constitute a DNA-binding region (homeobox 3); the sequence is PQKFKEKTAE…TKALKDEKVE (63 aa). A Glycyl lysine isopeptide (Lys-Gly) (interchain with G-Cter in SUMO2) cross-link involves residue Lys-629. Ser-648 bears the Phosphoserine mark. A DNA-binding region (homeobox 4) is located at residues 660 to 722; sequence GTGKICKKTP…YAWKNGNLKW (63 aa). Positions 734–768 are required for nuclear localization; sequence LNGLSSLRKRGRGRPKGRGRGRPRGRPRGGKRMNT. Positions 740-764 are enriched in basic residues; that stretch reads LRKRGRGRPKGRGRGRPRGRPRGGK. Position 774 is a phosphoserine (Ser-774). Residues 777–832 constitute a DNA-binding region (homeobox 5); it reads KFKTGTAILKDYYLKHKFLNEQDLDELVNRSHMGYEQVREWFAERQRRSELGIELF. Positions 829 to 873 are disordered; the sequence is IELFEENEEEDEVIDDQEEDEEETDDSDTWEPPRHVKRKLSKSDD. Residues 831–857 are compositionally biased toward acidic residues; the sequence is LFEENEEEDEVIDDQEEDEEETDDSDT. Positions 831 to 873 are required for repressor activity; it reads LFEENEEEDEVIDDQEEDEEETDDSDTWEPPRHVKRKLSKSDD. The segment covering 863 to 873 has biased composition (basic residues); it reads HVKRKLSKSDD.

It belongs to the ZHX family. As to quaternary structure, forms homodimers. Heterodimer (via HD1 domain) with ZHX2 (via HD1 domain). Also forms a heterodimer with ZHX3 which is a prerequisite for repressor activity. Interacts with ATF7IP and NFYA. Interacts (via homeobox domains) with DNMT3B (via PWWP domain). In terms of tissue distribution, ubiquitously expressed.

The protein resides in the nucleus. Acts as a transcriptional repressor. Increases DNMT3B-mediated repressive transcriptional activity when DNMT3B is tethered to DNA. May link molecule between DNMT3B and other co-repressor proteins. This chain is Zinc fingers and homeoboxes protein 1 (Zhx1), found in Rattus norvegicus (Rat).